The following is a 327-amino-acid chain: Surface protein P12p (327 aa).

2 consecutive 6-Cys domains span residues 21–168 (NIEI…LKKN) and 169–304 (IIFG…FSNY). Disulfide bonds link Cys-25–Cys-60, Cys-74–Cys-144, Cys-93–Cys-142, Cys-173–Cys-208, Cys-223–Cys-285, and Cys-234–Cys-283. N-linked (GlcNAc...) asparagine glycans are attached at residues Asn-246, Asn-264, and Asn-298.

It is found in the cell surface. The protein localises to the cell membrane. The polypeptide is Surface protein P12p (P12p) (Plasmodium berghei (strain Anka)).